The sequence spans 139 residues: Large ribosomal subunit protein uL16 (139 aa).

The protein belongs to the universal ribosomal protein uL16 family. Part of the 50S ribosomal subunit.

Its function is as follows. Binds 23S rRNA and is also seen to make contacts with the A and possibly P site tRNAs. The polypeptide is Large ribosomal subunit protein uL16 (Crocosphaera subtropica (strain ATCC 51142 / BH68) (Cyanothece sp. (strain ATCC 51142))).